The chain runs to 452 residues: Isocitrate dehydrogenase [NADP], mitochondrial (452 aa).

Residues 1-39 (MAGYLRAVSSLCRASGSTRTWAPAALNVPSWPEQPRRHY) constitute a mitochondrion transit peptide. N6-acetyllysine occurs at positions 45, 48, 67, and 69. An N6-acetyllysine; alternate mark is found at lysine 80 and lysine 106. Residues lysine 80 and lysine 106 each carry the N6-succinyllysine; alternate modification. Residues 115-117 (TIT) and arginine 122 each bind NADP(+). Threonine 117 contributes to the D-threo-isocitrate binding site. D-threo-isocitrate is bound by residues 134–140 (SPNGTIR) and arginine 149. Position 155 is an N6-acetyllysine (lysine 155). The residue at position 166 (lysine 166) is an N6-acetyllysine; alternate. Lysine 166 carries the post-translational modification N6-succinyllysine; alternate. Arginine 172 contributes to the D-threo-isocitrate binding site. Lysine 180 and lysine 193 each carry N6-acetyllysine; alternate. Lysine 180 and lysine 193 each carry N6-succinyllysine; alternate. Lysine 199 is modified (N6-acetyllysine). Lysine 256 carries the N6-acetyllysine; alternate modification. At lysine 256 the chain carries N6-succinyllysine; alternate. An N6-acetyllysine mark is found at lysine 263, lysine 272, lysine 275, and lysine 280. Lysine 282 is subject to N6-acetyllysine; alternate. Lysine 282 is modified (N6-succinyllysine; alternate). Aspartate 291 lines the Mn(2+) pocket. Lysine 299 contributes to the NADP(+) binding site. Position 314 (aspartate 314) interacts with Mn(2+). NADP(+) is bound by residues 349–354 (GTVTRH) and asparagine 367. Position 384 is an N6-acetyllysine; alternate (lysine 384). Lysine 384 is modified (N6-succinyllysine; alternate). N6-acetyllysine occurs at positions 400, 413, and 442.

This sequence belongs to the isocitrate and isopropylmalate dehydrogenases family. In terms of assembly, homodimer. The cofactor is Mg(2+). It depends on Mn(2+) as a cofactor. Acetylation at Lys-413 dramatically reduces catalytic activity. Deacetylated by SIRT3.

Its subcellular location is the mitochondrion. It carries out the reaction D-threo-isocitrate + NADP(+) = 2-oxoglutarate + CO2 + NADPH. Functionally, plays a role in intermediary metabolism and energy production. It may tightly associate or interact with the pyruvate dehydrogenase complex. The chain is Isocitrate dehydrogenase [NADP], mitochondrial (Idh2) from Rattus norvegicus (Rat).